The following is a 218-amino-acid chain: Small ribosomal subunit protein mS34 (218 aa).

Residues 180-218 (KNGDTSTEEPMLNVQRIRMEPWDYPAKQEDKGRAKGTPV) form a disordered region. A compositionally biased stretch (basic and acidic residues) spans 196-212 (IRMEPWDYPAKQEDKGR).

Belongs to the mitochondrion-specific ribosomal protein mS34 family. In terms of assembly, component of the mitochondrial small ribosomal subunit (mt-SSU). Mature mammalian 55S mitochondrial ribosomes consist of a small (28S) and a large (39S) subunit. The 28S small subunit contains a 12S ribosomal RNA (12S mt-rRNA) and 30 different proteins. The 39S large subunit contains a 16S rRNA (16S mt-rRNA), a copy of mitochondrial valine transfer RNA (mt-tRNA(Val)), which plays an integral structural role, and 52 different proteins.

It is found in the mitochondrion. Functionally, required for mitochondrial translation, plays a role in maintaining the stability of the small ribosomal subunit and the 12S rRNA that are required for mitoribosome formation. This is Small ribosomal subunit protein mS34 (MRPS34) from Homo sapiens (Human).